Here is a 593-residue protein sequence, read N- to C-terminus: ETS-related transcription factor Elf-2 (593 aa).

Residues 1–34 form a disordered region; the sequence is MASAVVDSGGSALELPSDGGENQEGGDTGPDCPA. Serine 107 carries the phosphoserine modification. The segment at 146–199 is disordered; that stretch reads VEVSTEESEPMDASPIPTSPDSHEPMKKKKVGRKPKTQQSPVSNGSPELGIKKK. Positions 171 to 181 are enriched in basic residues; that stretch reads MKKKKVGRKPK. Threonine 182 carries the phosphothreonine modification. A compositionally biased stretch (polar residues) spans 182-191; it reads TQQSPVSNGS. Phosphoserine occurs at positions 185 and 191. The ETS DNA-binding region spans 208 to 290; the sequence is TYLWEFLLDL…EGQRLVYQFK (83 aa). The disordered stretch occupies residues 362-383; sequence TSPTHDGSSRSPTTTAPVSAAA. Phosphoserine occurs at positions 363 and 372. A compositionally biased stretch (low complexity) spans 370-383; that stretch reads SRSPTTTAPVSAAA. A Phosphothreonine modification is found at threonine 376. At serine 432 the chain carries Phosphoserine. Arginine 496 is subject to Omega-N-methylarginine. Phosphothreonine is present on threonine 523. Lysine 538 is covalently cross-linked (Glycyl lysine isopeptide (Lys-Gly) (interchain with G-Cter in SUMO2)).

Belongs to the ETS family. Interacts with LIM domains of LMO2. Interacts via its N-terminal region with RUNX1. As to expression, expressed in all tissues examined. Highest levels in thymocytes and bone marrow.

The protein localises to the nucleus. Its function is as follows. Probably transcriptionally activates the LYN and BLK promoters and acts synergistically with RUNX1 to transactivate the BLK promoter. The chain is ETS-related transcription factor Elf-2 from Mus musculus (Mouse).